The following is a 410-amino-acid chain: Cytochrome P450 (410 aa).

Cys359 lines the heme pocket.

It belongs to the cytochrome P450 family. Heme is required as a cofactor.

This Bacillus subtilis (strain 168) protein is Cytochrome P450 (cypA).